The chain runs to 445 residues: Phosphoglucosamine mutase (445 aa).

The active-site Phosphoserine intermediate is Ser-102. The Mg(2+) site is built by Ser-102, Asp-241, Asp-243, and Asp-245. Phosphoserine is present on Ser-102.

It belongs to the phosphohexose mutase family. It depends on Mg(2+) as a cofactor. In terms of processing, activated by phosphorylation.

It carries out the reaction alpha-D-glucosamine 1-phosphate = D-glucosamine 6-phosphate. Catalyzes the conversion of glucosamine-6-phosphate to glucosamine-1-phosphate. The protein is Phosphoglucosamine mutase of Shewanella halifaxensis (strain HAW-EB4).